We begin with the raw amino-acid sequence, 116 residues long: Large ribosomal subunit protein bL17 (116 aa).

The protein belongs to the bacterial ribosomal protein bL17 family. In terms of assembly, part of the 50S ribosomal subunit. Contacts protein L32.

The protein is Large ribosomal subunit protein bL17 of Acaryochloris marina (strain MBIC 11017).